A 369-amino-acid chain; its full sequence is UDP-3-O-acylglucosamine N-acyltransferase (369 aa).

His263 serves as the catalytic Proton acceptor.

It belongs to the transferase hexapeptide repeat family. LpxD subfamily. Homotrimer.

The catalysed reaction is a UDP-3-O-[(3R)-3-hydroxyacyl]-alpha-D-glucosamine + a (3R)-hydroxyacyl-[ACP] = a UDP-2-N,3-O-bis[(3R)-3-hydroxyacyl]-alpha-D-glucosamine + holo-[ACP] + H(+). Its pathway is bacterial outer membrane biogenesis; LPS lipid A biosynthesis. Functionally, catalyzes the N-acylation of UDP-3-O-acylglucosamine using 3-hydroxyacyl-ACP as the acyl donor. Is involved in the biosynthesis of lipid A, a phosphorylated glycolipid that anchors the lipopolysaccharide to the outer membrane of the cell. The sequence is that of UDP-3-O-acylglucosamine N-acyltransferase from Burkholderia vietnamiensis (strain G4 / LMG 22486) (Burkholderia cepacia (strain R1808)).